A 250-amino-acid polypeptide reads, in one-letter code: Triosephosphate isomerase (250 aa).

9-11 contributes to the substrate binding site; the sequence is NWK. Catalysis depends on His-95, which acts as the Electrophile. The active-site Proton acceptor is the Glu-167. Residues Gly-173, Ser-213, and 234–235 each bind substrate; that span reads GG.

Belongs to the triosephosphate isomerase family. Homodimer.

The protein localises to the cytoplasm. It catalyses the reaction D-glyceraldehyde 3-phosphate = dihydroxyacetone phosphate. The protein operates within carbohydrate biosynthesis; gluconeogenesis. Its pathway is carbohydrate degradation; glycolysis; D-glyceraldehyde 3-phosphate from glycerone phosphate: step 1/1. Functionally, involved in the gluconeogenesis. Catalyzes stereospecifically the conversion of dihydroxyacetone phosphate (DHAP) to D-glyceraldehyde-3-phosphate (G3P). The sequence is that of Triosephosphate isomerase from Flavobacterium psychrophilum (strain ATCC 49511 / DSM 21280 / CIP 103535 / JIP02/86).